We begin with the raw amino-acid sequence, 318 residues long: Olfactory receptor 52D1 (318 aa).

Over 1–28 (MSDSNLSDNHLPDTFFLTGIPGLEAAHF) the chain is Extracellular. An N-linked (GlcNAc...) asparagine glycan is attached at asparagine 5. Residues 29–49 (WIAIPFCAMYLVALVGNAALI) form a helical membrane-spanning segment. The Cytoplasmic segment spans residues 50-57 (LVIAMDNA). Residues 58-78 (LHAPMYLFLCLLSLTDLALSS) traverse the membrane as a helical segment. The Extracellular portion of the chain corresponds to 79 to 102 (TTVPKMLAILWLHAGEISFGGCLA). A disulfide bond links cysteine 100 and cysteine 192. A helical membrane pass occupies residues 103-123 (QMFCVHSIYALESSILLAMAF). At 124–142 (DRYVAICNPLRYTTILNHA) the chain is on the cytoplasmic side. A helical membrane pass occupies residues 143-163 (VIGRIGFVGLFRSVAIVSPFI). Over 164-199 (FLLRRLPYCGHRVMTHTYCEHMGIARLACANITVNI) the chain is Extracellular. A helical membrane pass occupies residues 200–220 (VYGLTVALLAMGLDSILIAIS). Over 221–240 (YGFILHAVFHLPSHDAQHKA) the chain is Cytoplasmic. Residues 241–261 (LSTCGSHIGIILVFYIPAFFS) traverse the membrane as a helical segment. The Extracellular segment spans residues 262–277 (FLTHRFGHHEVPKHVH). Residues 278–298 (IFLANLYVLVPPVLNPILYGA) form a helical membrane-spanning segment. Over 299–318 (RTKEIRSRLLKLLHLGKTSI) the chain is Cytoplasmic.

Belongs to the G-protein coupled receptor 1 family.

The protein resides in the cell membrane. Its function is as follows. Odorant receptor. The chain is Olfactory receptor 52D1 (OR52D1) from Homo sapiens (Human).